The following is a 456-amino-acid chain: Equilibrative nucleoside transporter 2 (456 aa).

The chain crosses the membrane as a helical span at residues 13 to 33; it reads LVGISFFILGLGTLLPWNFFI. Residue Asn-56 is glycosylated (N-linked (GlcNAc...) asparagine). 5 helical membrane passes run 69-89, 98-118, 123-143, 161-181, and 192-212; these read WVTL…SFLY, ILGS…LVKV, GLFF…CAVL, LFLS…LMSL, and LGYF…YLSL. Residues 248–277 form a disordered region; the sequence is GVPISPQQASPTLDLDPEKEPEPEEPQKPG. Ser-252 carries the post-translational modification Phosphoserine. Basic and acidic residues predominate over residues 263-275; the sequence is DPEKEPEPEEPQK. 5 helical membrane-spanning segments follow: residues 288–308, 323–343, 360–380, 396–416, and 432–452; these read IWLT…VFPA, WGLF…DWLG, LLPL…LCHV, FITF…LTMC, and ALMT…SFLF.

Belongs to the SLC29A/ENT transporter (TC 2.A.57) family.

It is found in the apical cell membrane. The protein resides in the basolateral cell membrane. Its subcellular location is the nucleus membrane. It carries out the reaction inosine(in) = inosine(out). The enzyme catalyses adenosine(in) = adenosine(out). It catalyses the reaction uridine(out) = uridine(in). The catalysed reaction is thymidine(in) = thymidine(out). It carries out the reaction hypoxanthine(out) = hypoxanthine(in). The enzyme catalyses adenine(out) = adenine(in). It catalyses the reaction cytidine(in) = cytidine(out). The catalysed reaction is thymine(out) = thymine(in). It carries out the reaction uracil(in) = uracil(out). The enzyme catalyses guanine(out) = guanine(in). It catalyses the reaction guanosine(in) = guanosine(out). Bidirectional uniporter involved in the facilitative transport of nucleosides and nucleobases, and contributes to maintaining their cellular homeostasis. Functions as a Na(+)-independent, passive transporter. Involved in the transport of nucleosides such as inosine, adenosine, uridine, thymidine, cytidine and guanosine. Also able to transport purine nucleobases (hypoxanthine, adenine, guanine) and pyrimidine nucleobases (thymine, uracil). Involved in nucleoside transport at basolateral membrane of kidney cells, allowing liver absorption of nucleoside metabolites. Mediates apical nucleoside uptake into Sertoli cells, thereby regulating the transport of nucleosides in testis across the blood-testis-barrier. Mediates both the influx and efflux of hypoxanthine in skeletal muscle microvascular endothelial cells to control the amount of intracellular hypoxanthine available for xanthine oxidase-mediated ROS production. The chain is Equilibrative nucleoside transporter 2 from Mus musculus (Mouse).